The following is a 693-amino-acid chain: Putative transmembrane protein ORF68 (693 aa).

An N-terminal signal peptide occupies residues 1–17 (MILTIILYTLLFSTCSA). At 18 to 666 (QSVHTMPEAV…WLTKFGTGGG (649 aa)) the chain is on the extracellular side. Positions 208–256 (SKAANNRMDALEDGMKNINTRVTETNLLLEKLSTEVTGALTQLENEIKM) form a coiled coil. The chain crosses the membrane as a helical span at residues 667-687 (IAGVTIGLLLPILAIVFSCYV). Residues 688–693 (FCKRRV) are Cytoplasmic-facing.

The protein localises to the host membrane. In Magallana gigas (Pacific oyster), this protein is Putative transmembrane protein ORF68.